Here is a 688-residue protein sequence, read N- to C-terminus: Lap-Emerin-Man domain protein 2 (688 aa).

Disordered regions lie at residues 62–113 (LQKE…IDKP) and 202–227 (PQLR…HKRP). Residues 82 to 92 (PKYLYPSSPSK) show a composition bias toward low complexity. A compositionally biased stretch (polar residues) spans 212-222 (RLQTSATSSPL). 2 helical membrane-spanning segments follow: residues 318 to 338 (YLVH…LALL) and 547 to 567 (KVFL…INFF). T683 is subject to Phosphothreonine. S684 carries the post-translational modification Phosphoserine.

It localises to the nucleus inner membrane. Nucleus inner membrane protein involved in meiosis. Plays a role in regulating nuclear envelope (NE) morphology and nuclear integrity, particularly during spindle pole body (SPB) extrusion or insertion through the NE, and perhaps during karyokinesis. This is Lap-Emerin-Man domain protein 2 (lem2) from Schizosaccharomyces pombe (strain 972 / ATCC 24843) (Fission yeast).